Reading from the N-terminus, the 300-residue chain is Formyltetrahydrofolate deformylase (300 aa).

Positions Arg21–Glu102 constitute an ACT domain. The active site involves Asp244.

The protein belongs to the PurU family.

It carries out the reaction (6R)-10-formyltetrahydrofolate + H2O = (6S)-5,6,7,8-tetrahydrofolate + formate + H(+). Its pathway is purine metabolism; IMP biosynthesis via de novo pathway; formate from 10-formyl-5,6,7,8-tetrahydrofolate: step 1/1. Its function is as follows. Catalyzes the hydrolysis of 10-formyltetrahydrofolate (formyl-FH4) to formate and tetrahydrofolate (FH4). In Bacillus subtilis (strain 168), this protein is Formyltetrahydrofolate deformylase.